Reading from the N-terminus, the 200-residue chain is ATP synthase subunit s, mitochondrial (200 aa).

The transit peptide at 1 to 25 (MMLFGKISQQLCGVKKLPWSCDSRY) directs the protein to the mitochondrion. The tract at residues 1–61 (MMLFGKISQQ…SEWLLRCGAM (61 aa)) is N-terminal domain. G59 contributes to the Mg(2+) binding site. LRR repeat units follow at residues 62-87 (VRYH…KYKI), 88-116 (QAID…KIRL), 117-141 (CKCH…KTIL), and 142-173 (EMEI…LSDL). T93 lines the Mg(2+) pocket.

It belongs to the ATP synthase subunit s family. Homotetramer. Associates with ATP synthase.

Its subcellular location is the mitochondrion. It is found in the mitochondrion inner membrane. Involved in regulation of mitochondrial membrane ATP synthase. Necessary for H(+) conduction of ATP synthase. Facilitates energy-driven catalysis of ATP synthesis by blocking a proton leak through an alternative proton exit pathway. This chain is ATP synthase subunit s, mitochondrial (DMAC2L), found in Pongo abelii (Sumatran orangutan).